We begin with the raw amino-acid sequence, 92 residues long: Sugar fermentation stimulation protein B (92 aa).

The segment at residues 50–69 (EMIIAKALGTDPWVIWPSRY) is a DNA-binding region (H-T-H motif).

This sequence belongs to the ner transcriptional regulatory family.

This protein is involved in positive regulation of the metabolism of sugars. The protein is Sugar fermentation stimulation protein B (sfsB) of Escherichia coli O157:H7.